A 449-amino-acid chain; its full sequence is Serum response factor homolog (449 aa).

A disordered region spans residues 23-166 (LADPADMYGN…PPANGKKTKG (144 aa)). Over residues 69 to 80 (QCQTLHSPQHAS) the composition is skewed to polar residues. The segment covering 81 to 107 (QQQQQQQQQQQQHQQQQQQQQQHPQQQ) has biased composition (low complexity). Residue Ser156 is modified to Phosphoserine. One can recognise an MADS-box domain in the interval 167–225 (RVKIKMEYIDNKLRRYTTFSKRKTGIMKKAYELSTLTGTQVMLLVASETGHVYTFATRK). 2 disordered regions span residues 270–360 (YNIA…GGGS) and 418–449 (LTAS…QEFD). Low complexity-rich tracts occupy residues 317-331 (SAPP…TASS) and 345-354 (TNSGPSTSTA).

As to expression, after germ band retraction, high levels of zygotic expression are observed in a distinct subset of peripheral tracheal cells distributed throughout the embryo and low levels in somatic muscle. Expressed in the future intervein tissue of the wing imaginal disk from the third instar larvae until eclosion of the adult fly (at protein level).

The protein localises to the nucleus. Required for the formation of intervein tissue of the wing. Acts in a dosage-dependent manner to suppress wing vein formation and promote development of intervein cells. Might play a role in the proper formation and maintenance of the trachea. In Drosophila melanogaster (Fruit fly), this protein is Serum response factor homolog (bs).